The following is a 271-amino-acid chain: ATP synthase subunit a (271 aa).

Transmembrane regions (helical) follow at residues 40–60 (TINI…LVLF), 100–120 (LIAP…LMDL), 146–166 (DVNV…FYSI), 220–240 (LIFI…LNVP), and 242–262 (AIFH…LTIV).

It belongs to the ATPase A chain family. F-type ATPases have 2 components, CF(1) - the catalytic core - and CF(0) - the membrane proton channel. CF(1) has five subunits: alpha(3), beta(3), gamma(1), delta(1), epsilon(1). CF(0) has three main subunits: a(1), b(2) and c(9-12). The alpha and beta chains form an alternating ring which encloses part of the gamma chain. CF(1) is attached to CF(0) by a central stalk formed by the gamma and epsilon chains, while a peripheral stalk is formed by the delta and b chains.

The protein localises to the cell inner membrane. Functionally, key component of the proton channel; it plays a direct role in the translocation of protons across the membrane. This Shigella dysenteriae serotype 1 (strain Sd197) protein is ATP synthase subunit a.